Here is a 121-residue protein sequence, read N- to C-terminus: Large ribosomal subunit protein uL14c (121 aa).

Belongs to the universal ribosomal protein uL14 family. In terms of assembly, part of the 50S ribosomal subunit.

It is found in the plastid. The protein localises to the chloroplast. In terms of biological role, binds to 23S rRNA. This Thalassiosira pseudonana (Marine diatom) protein is Large ribosomal subunit protein uL14c.